A 352-amino-acid chain; its full sequence is S-adenosylmethionine:tRNA ribosyltransferase-isomerase (352 aa).

The protein belongs to the QueA family. Monomer.

The protein resides in the cytoplasm. It catalyses the reaction 7-aminomethyl-7-carbaguanosine(34) in tRNA + S-adenosyl-L-methionine = epoxyqueuosine(34) in tRNA + adenine + L-methionine + 2 H(+). Its pathway is tRNA modification; tRNA-queuosine biosynthesis. Functionally, transfers and isomerizes the ribose moiety from AdoMet to the 7-aminomethyl group of 7-deazaguanine (preQ1-tRNA) to give epoxyqueuosine (oQ-tRNA). The chain is S-adenosylmethionine:tRNA ribosyltransferase-isomerase from Paraburkholderia phytofirmans (strain DSM 17436 / LMG 22146 / PsJN) (Burkholderia phytofirmans).